The primary structure comprises 531 residues: Dihydropyrimidinase (531 aa).

Zn(2+)-binding residues include His-103, His-105, and Lys-193. Residue Lys-193 is modified to N6-carboxylysine. Residue Tyr-198 participates in substrate binding. Zn(2+)-binding residues include His-226 and His-282. Ser-332 provides a ligand contact to substrate. Asp-359 lines the Zn(2+) pocket. Asn-380 provides a ligand contact to substrate.

It belongs to the metallo-dependent hydrolases superfamily. Hydantoinase/dihydropyrimidinase family. Homotetramer. Zn(2+) is required as a cofactor. Carboxylation allows a single lysine to coordinate two zinc ions.

It localises to the endoplasmic reticulum. The catalysed reaction is 5,6-dihydrouracil + H2O = 3-(carbamoylamino)propanoate + H(+). It participates in amino-acid biosynthesis; beta-alanine biosynthesis. Catalyzes the second step of the reductive pyrimidine degradation, the reversible hydrolytic ring opening of dihydropyrimidines. Can catalyze the ring opening of 5,6-dihydrouracil to N-carbamoyl-alanine and of 5,6-dihydrothymine to N-carbamoyl-amino isobutyrate. Involved in the recycling of nitrogen from nucleobases to general nitrogen metabolism. The chain is Dihydropyrimidinase from Arabidopsis thaliana (Mouse-ear cress).